Consider the following 392-residue polypeptide: L-rhamnonate dehydratase (392 aa).

Substrate-binding residues include histidine 22 and arginine 48. Mg(2+) contacts are provided by aspartate 214, glutamate 240, and glutamate 268. Histidine 318 serves as the catalytic Proton acceptor. A substrate-binding site is contributed by glutamate 338.

This sequence belongs to the mandelate racemase/muconate lactonizing enzyme family. RhamD subfamily. In terms of assembly, homooctamer; tetramer of dimers. Mg(2+) serves as cofactor.

It catalyses the reaction L-rhamnonate = 2-dehydro-3-deoxy-L-rhamnonate + H2O. Catalyzes the dehydration of L-rhamnonate to 2-keto-3-deoxy-L-rhamnonate (KDR). The protein is L-rhamnonate dehydratase of Paraburkholderia phymatum (strain DSM 17167 / CIP 108236 / LMG 21445 / STM815) (Burkholderia phymatum).